Consider the following 964-residue polypeptide: MNSTLQNQTKTNLEKVGTDPLDTFPRRHIGPNLQQTAEMLKELGLSSVEELIDKAVPVGIRLKKSLDLPKASTEHKILQNLKGIASQNQVFRSYIGAGYHSCIIPGVIQRNILENPGWYTAYTPYQAEISQGRLEALLNFQTMIIDLTGLEISNASLLDEGTAAAEAMFLAYSVRKNETAKKFFVSELCHPQTIDVVVTRANPLGIEVQIGNHESIELNEDFFGVLLQYPATDGKIIDYTSFIQRSHNVGAISTVAADLLALTLLKSPGEMGADIAVGSSQRFGLPLGFGGPHAGYFATKDEFKRSMPGRLIGVSKDSQGNSGLRLSLQTREQHIRRDKATSNICTAQVLLAVISSMYAVYHGPEGLKNIATRIYKFTSIFANVLKNAGFSITNEFFFDTITIQAGTKVQEILNRAYSKKINFREYKDGKIGITLDETVNLEDLKDLLEIFEIKNTDIEKLFVDVSNVPDSFKRKTSYLTHPVFQSHHTETKMLRYIRKLESRDLSLTTSMIPLGSCTMKLNATTEMYPVTWPEFGAIHPFAPADQTKGYKIIFEQLEKWLCEITGFAGVSLQPNAGSQGEYAGLLAIRRYHESRNESYRNVCLIPISAHGTNPASAAMAGFQVVVVSCDPNGNVDLEDLKAKAEEHKKDLAALMITYPSTHGVFEESVKEICQIVHSCGGQVYMDGANMNAQVGLTSPGEIGADVCHLNLHKTFCIPHGGGGPGVGPIGVAKHLVPFLPGHVLVDNATGNEHGAVSAAPWGSASIVLISWVYIALMGSEGLTNATRNSILNANYIAKRLEKVYPVLYKGKNGFVAHECILDLRPFKKSAGIEVEDVAKRLIDYGFHAPTMSFPVPGTLMIEPTESESLEELDRFCEAMLLIYQEILDVQSGTLDKTDNPLKNSPHTAAMVTSDRWDHLYPRERAAYPASWLKDHKFWPYVGRVDNVYGDRNLVCSCLPIESYQ.

A compositionally biased stretch (polar residues) spans 1–11 (MNSTLQNQTKT). The interval 1–21 (MNSTLQNQTKTNLEKVGTDPL) is disordered. An N6-(pyridoxal phosphate)lysine modification is found at Lys-713.

It belongs to the GcvP family. In terms of assembly, the glycine cleavage system is composed of four proteins: P, T, L and H. The cofactor is pyridoxal 5'-phosphate.

The catalysed reaction is N(6)-[(R)-lipoyl]-L-lysyl-[glycine-cleavage complex H protein] + glycine + H(+) = N(6)-[(R)-S(8)-aminomethyldihydrolipoyl]-L-lysyl-[glycine-cleavage complex H protein] + CO2. The glycine cleavage system catalyzes the degradation of glycine. The P protein binds the alpha-amino group of glycine through its pyridoxal phosphate cofactor; CO(2) is released and the remaining methylamine moiety is then transferred to the lipoamide cofactor of the H protein. This is Glycine dehydrogenase (decarboxylating) from Leptospira interrogans serogroup Icterohaemorrhagiae serovar copenhageni (strain Fiocruz L1-130).